Here is a 277-residue protein sequence, read N- to C-terminus: Putative phosphoenolpyruvate synthase regulatory protein (277 aa).

ADP is bound at residue 157-164; it reads GVSRCGKT.

It belongs to the pyruvate, phosphate/water dikinase regulatory protein family. PSRP subfamily.

It catalyses the reaction [pyruvate, water dikinase] + ADP = [pyruvate, water dikinase]-phosphate + AMP + H(+). The enzyme catalyses [pyruvate, water dikinase]-phosphate + phosphate + H(+) = [pyruvate, water dikinase] + diphosphate. Functionally, bifunctional serine/threonine kinase and phosphorylase involved in the regulation of the phosphoenolpyruvate synthase (PEPS) by catalyzing its phosphorylation/dephosphorylation. The polypeptide is Putative phosphoenolpyruvate synthase regulatory protein (Citrobacter koseri (strain ATCC BAA-895 / CDC 4225-83 / SGSC4696)).